The primary structure comprises 862 residues: MMKSNASPSESLSHHTPMMQQYLRLKAENPDILLFYRMGDFYELFYDDAKRASELLDISLTKRGASAGEPIPMAGVPFHAVEGYLAKLVQMGESVAICEQIGDPATSKGPVERKVVRIVTPGTVTDEALLSERVDNLIAAIYHHNGRFGYATMDITSGRFQLSEPQTEEEMAAELQRTSPRELLFPEDFSPVHLMASRQGNRRRPIWEFELDTAKQQLNQQFGTRDLVGFGVEQAKLGLCAAGCLIQYVKDTQRTALPHIRSLTWDRQDQSVILDAATRRNLELTHNLAGGTDNTLAEVLDHCATPMGSRMLKRWIHQPMRDNATLNQRLDAITELKETALYGELHPVLKQIGDIERILARLALRSARPRDLARLRHAMQQLPELHSVMSELKQPHLTELRTHAEPMDELCDLLERAIKENPPVVIRDGGVIADGYSAELDEWRDLANGATEFLERLEAEERDRHGIDTLKVGYNNVHGFYIQVSRGQSHLVPPHYVRRQTLKNAERYIIEELKQHEDKVLNSKSRALALEKQLWEELFDLLMPHLEQLQQLAASVAQLDVLQNLAERAENLEYCRPTLVQEAGIHIQGGRHPVVERVMNEPFIANPIELNPQRRMLIITGPNMGGKSTYMRQTALIALMAHIGSYVPAESASIGPLDRIFTRIGASDDLASGRSTFMVEMTETANILHNATRNSLVLMDEIGRGTSTYDGLSLAWASAEWLAKEIGAMTLFATHYFELTELPNVLPHLANVHLDAVEHGDGIAFMHAVQEGAASKSYGLAVAGLAGVPKPVIKNARAKLQQLELLSSQPAETRKPSRVDIANQLSLIPEPSAVEQALAGVDPDQLTPRQALDMLYQLKKLL.

621 to 628 (GPNMGGKS) is an ATP binding site.

It belongs to the DNA mismatch repair MutS family.

Functionally, this protein is involved in the repair of mismatches in DNA. It is possible that it carries out the mismatch recognition step. This protein has a weak ATPase activity. This is DNA mismatch repair protein MutS from Vibrio cholerae serotype O1 (strain ATCC 39541 / Classical Ogawa 395 / O395).